We begin with the raw amino-acid sequence, 650 residues long: Macrolide export ATP-binding/permease protein MacB (650 aa).

In terms of domain architecture, ABC transporter spans 6 to 244 (LKLTGITRRF…ASSPEAASSP (239 aa)). ATP is bound at residue 42–49 (GASGSGKS). Residues 227–246 (QTRPEEATASSPEAASSPAT) form a disordered region. Low complexity predominate over residues 233-246 (ATASSPEAASSPAT). The next 4 membrane-spanning stretches (helical) occupy residues 275–295 (FLTMLGIIIGIASVVSVVALG), 523–543 (LTLLVSMIALISLLVGGIGVM), 580–600 (LVCLFGGIAGVALSLAIGVLF), and 615–635 (SIIAAFLCSSLIGIIFGFFPA).

The protein belongs to the ABC transporter superfamily. Macrolide exporter (TC 3.A.1.122) family. In terms of assembly, homodimer. Part of the tripartite efflux system MacAB-TolC, which is composed of an inner membrane transporter, MacB, a periplasmic membrane fusion protein, MacA, and an outer membrane component, TolC. The complex forms a large protein conduit and can translocate molecules across both the inner and outer membranes. Interacts with MacA.

The protein resides in the cell inner membrane. In terms of biological role, part of the tripartite efflux system MacAB-TolC. MacB is a non-canonical ABC transporter that contains transmembrane domains (TMD), which form a pore in the inner membrane, and an ATP-binding domain (NBD), which is responsible for energy generation. Confers resistance against macrolides. The sequence is that of Macrolide export ATP-binding/permease protein MacB from Pectobacterium atrosepticum (strain SCRI 1043 / ATCC BAA-672) (Erwinia carotovora subsp. atroseptica).